Here is a 145-residue protein sequence, read N- to C-terminus: 3-hydroxyacyl-[acyl-carrier-protein] dehydratase FabZ (145 aa).

His-48 is a catalytic residue.

It belongs to the thioester dehydratase family. FabZ subfamily.

It is found in the cytoplasm. It catalyses the reaction a (3R)-hydroxyacyl-[ACP] = a (2E)-enoyl-[ACP] + H2O. Its function is as follows. Involved in unsaturated fatty acids biosynthesis. Catalyzes the dehydration of short chain beta-hydroxyacyl-ACPs and long chain saturated and unsaturated beta-hydroxyacyl-ACPs. The chain is 3-hydroxyacyl-[acyl-carrier-protein] dehydratase FabZ from Geobacillus thermodenitrificans (strain NG80-2).